A 204-amino-acid polypeptide reads, in one-letter code: Dihydroorotase (204 aa).

Residue histidine 34 participates in Zn(2+) binding. Substrate is bound at residue leucine 79. Zn(2+) is bound at residue aspartate 107. Aspartate 107 is a catalytic residue. Substrate-binding residues include histidine 111 and alanine 123.

The protein belongs to the metallo-dependent hydrolases superfamily. DHOase family. Class II DHOase subfamily. In terms of assembly, homodimer. It depends on Zn(2+) as a cofactor.

The catalysed reaction is (S)-dihydroorotate + H2O = N-carbamoyl-L-aspartate + H(+). It functions in the pathway pyrimidine metabolism; UMP biosynthesis via de novo pathway; (S)-dihydroorotate from bicarbonate: step 3/3. Catalyzes the reversible cyclization of carbamoyl aspartate to dihydroorotate. This chain is Dihydroorotase, found in Serratia marcescens.